The chain runs to 658 residues: MVARLLLRSWSRGLAVGPGAPCRPLSTGFEPSQYLQRSIVPTMHYQDSLPRLPIPKLEDTIRRYLSAQKPLLDDSQFRKTEQLCKSFETGIGKELHEQLVTQDKQNKHTSYISGPWFDMYLTARDPVVLNFNPFISFNPDPKSEYNDQLTRATNMTVSAIRFLKTLRADLLEPEVFHLNPAKSDTDTFKRFIRFVPSFLSWYGAYLVNAYPLDMSQYYRLFNSTRLPRPHRDELFTDDKARHLLVLRKGHFYIFDVLDQDGNIVSASEIQAHLKYILSDNSPAPEFPLSYLTSENRDIWAELRQRLVSGGNEATLGKVDSAVFCLCLDDFPIRDFVHLSHSMLHGDGTNRWFDKSFNLIIAKDGTAAIHFEHAWGDGVAVLRFFNEVFKDSTQAPAITPQSQPASTDSSVAVQKLNFKLSDALKTGISAAKEKFDATVKSLTIDYIRFQRGGREFLKKQKLSPDSMAQLAFQMAFLRQYGQTVATYESCSTAAFKHGRTETIRPASIFTKTCSEAFVREPSKYSAGELQQMMAKCSTYHNQLTREAAMGQGFDRHLFALRYLAAARGISMPELFLDPAYRQINHNILSTSTLSSPAVNIGCFAPVVPDGFGIGYSVQDNWIGCNVSAYQSRNAREFLQCVEKALEDMFDALEGKMIKT.

Residues 1–25 (MVARLLLRSWSRGLAVGPGAPCRPL) constitute a mitochondrion transit peptide. Topologically, residues 26–178 (STGFEPSQYL…DLLEPEVFHL (153 aa)) are mitochondrial matrix. The residue at position 69 (lysine 69) is an N6-succinyllysine. N6-acetyllysine is present on lysine 79. N6-succinyllysine is present on lysine 85. Residues 179-208 (NPAKSDTDTFKRFIRFVPSFLSWYGAYLVN) constitute an intramembrane region (note=Mitochondrial inner membrane). Residues 209-658 (AYPLDMSQYY…DALEGKMIKT (450 aa)) lie on the Mitochondrial matrix side of the membrane. Lysine 239 is subject to N6-acetyllysine; alternate. Lysine 239 is subject to N6-succinyllysine; alternate. The Proton acceptor role is filled by histidine 372. Position 418 is an N6-acetyllysine; alternate (lysine 418). Lysine 418 bears the N6-succinyllysine; alternate mark. An N6-succinyllysine mark is found at lysine 424 and lysine 439. 452–464 (GREFLKKQKLSPD) lines the CoA pocket. The (R)-carnitine site is built by tyrosine 486, serine 488, and threonine 499. Lysine 510 is modified (N6-acetyllysine; alternate). Lysine 510 carries the N6-succinyllysine; alternate modification.

The protein belongs to the carnitine/choline acetyltransferase family.

Its subcellular location is the mitochondrion inner membrane. The catalysed reaction is (R)-carnitine + hexadecanoyl-CoA = O-hexadecanoyl-(R)-carnitine + CoA. It carries out the reaction octanoyl-CoA + (R)-carnitine = O-octanoyl-(R)-carnitine + CoA. The enzyme catalyses decanoyl-CoA + (R)-carnitine = O-decanoyl-(R)-carnitine + CoA. It catalyses the reaction dodecanoyl-CoA + (R)-carnitine = O-dodecanoyl-R-carnitine + CoA. The catalysed reaction is tetradecanoyl-CoA + (R)-carnitine = O-tetradecanoyl-(R)-carnitine + CoA. It carries out the reaction (R)-carnitine + octadecanoyl-CoA = O-octadecanoyl-(R)-carnitine + CoA. The enzyme catalyses eicosanoyl-CoA + (R)-carnitine = O-eicosanoyl-(R)-carnitine + CoA. It catalyses the reaction (9Z)-tetradecenoyl-CoA + (R)-carnitine = O-(9Z)-tetradecenoyl-(R)-carnitine + CoA. The catalysed reaction is (5Z)-tetradecenoyl-CoA + (R)-carnitine = O-(5Z)-tetradecenoyl-(R)-carnitine + CoA. It carries out the reaction (R)-carnitine + (9Z)-octadecenoyl-CoA = O-(9Z)-octadecenoyl-(R)-carnitine + CoA. The enzyme catalyses 4,8-dimethylnonanoyl-CoA + (R)-carnitine = O-4,8-dimethylnonanoyl-(R)-carnitine + CoA. Its pathway is lipid metabolism; fatty acid beta-oxidation. Functionally, involved in the intramitochondrial synthesis of acylcarnitines from accumulated acyl-CoA metabolites. Reconverts acylcarnitines back into the respective acyl-CoA esters that can then undergo beta-oxidation, an essential step for the mitochondrial uptake of long-chain fatty acids and their subsequent beta-oxidation in the mitochondrion. Active with medium (C8-C12) and long-chain (C14-C18) acyl-CoA esters. The polypeptide is Carnitine O-palmitoyltransferase 2, mitochondrial (CPT2) (Bos taurus (Bovine)).